Reading from the N-terminus, the 548-residue chain is MSGDTGPPKQGGTRYGSISSPPSPEPQQAPPGGTYLSEKIPIPDTESGTFSLRKLWAFTGPGFLMSIAFLDPGNIESDLQAGAVAGFKLLWVLLWATVLGLLCQRLAARLGVVTGKDLGEVCHLYYPKVPRILLWLTIELAIVGSDMQEVIGTAIAFSLLSAGRIPLWGGVLITVVDTFFFLFLDNYGLRKLEAFFGFLITIMALTFGYEYVVAQPAQGALLQGLFLPSCPGCGQPELLQAVGIIGAIIMPHNIYLHSSLVKSREVDRSRRADIREANMYFLIEATIALSVSFLINLFVMAVFGQAFYKQTNQAAFNICADSSLHDYAPIFPRNNLTVAVDIYQGGVILGCLFGPPALYIWAVGLLAAGQSSTMTGTYAGQFVMEGFLKLRWSRFARVLLTRSCAILPTVLLAVFRDLRDLSGLNDLLNVLQSLLLPFAVLPILTFTSMPALMQEFANGLVSKVITSSIMVLVCAVNLYFVISYLPSLPHPAYFSLVALLAAAYLGLTTYLVWTCLITQGATLLAHSSHQRFLYGLPEEDQEKGRTSG.

The interval 1–38 (MSGDTGPPKQGGTRYGSISSPPSPEPQQAPPGGTYLSE) is disordered. At 1-55 (MSGDTGPPKQGGTRYGSISSPPSPEPQQAPPGGTYLSEKIPIPDTESGTFSLRKL) the chain is on the cytoplasmic side. A helical membrane pass occupies residues 56–73 (WAFTGPGFLMSIAFLDPG). The Extracellular portion of the chain corresponds to 74–82 (NIESDLQAG). A helical transmembrane segment spans residues 83–102 (AVAGFKLLWVLLWATVLGLL). At 103–139 (CQRLAARLGVVTGKDLGEVCHLYYPKVPRILLWLTIE) the chain is on the cytoplasmic side. A helical transmembrane segment spans residues 140 to 160 (LAIVGSDMQEVIGTAIAFSLL). Over 161 to 164 (SAGR) the chain is Extracellular. Residues 165–184 (IPLWGGVLITVVDTFFFLFL) form a helical membrane-spanning segment. Residues 185 to 193 (DNYGLRKLE) are Cytoplasmic-facing. Residues 194–214 (AFFGFLITIMALTFGYEYVVA) traverse the membrane as a helical segment. The Extracellular segment spans residues 215-237 (QPAQGALLQGLFLPSCPGCGQPE). The chain crosses the membrane as a helical span at residues 238–256 (LLQAVGIIGAIIMPHNIYL). Residues 257 to 284 (HSSLVKSREVDRSRRADIREANMYFLIE) are Cytoplasmic-facing. The chain crosses the membrane as a helical span at residues 285-304 (ATIALSVSFLINLFVMAVFG). The Extracellular segment spans residues 305-346 (QAFYKQTNQAAFNICADSSLHDYAPIFPRNNLTVAVDIYQGG). N335 carries an N-linked (GlcNAc...) asparagine glycan. Residues 347–366 (VILGCLFGPPALYIWAVGLL) form a helical membrane-spanning segment. Residues 367–397 (AAGQSSTMTGTYAGQFVMEGFLKLRWSRFAR) lie on the Cytoplasmic side of the membrane. A helical transmembrane segment spans residues 398–415 (VLLTRSCAILPTVLLAVF). Over 416-426 (RDLRDLSGLND) the chain is Extracellular. A helical membrane pass occupies residues 427 to 447 (LLNVLQSLLLPFAVLPILTFT). Residues 448–463 (SMPALMQEFANGLVSK) lie on the Cytoplasmic side of the membrane. A helical transmembrane segment spans residues 464–485 (VITSSIMVLVCAVNLYFVISYL). At 486-493 (PSLPHPAY) the chain is on the extracellular side. A helical membrane pass occupies residues 494–513 (FSLVALLAAAYLGLTTYLVW). Topologically, residues 514-548 (TCLITQGATLLAHSSHQRFLYGLPEEDQEKGRTSG) are cytoplasmic.

The protein belongs to the NRAMP family.

Its subcellular location is the late endosome membrane. It localises to the lysosome membrane. It carries out the reaction Zn(2+)(in) + H(+)(out) = Zn(2+)(out) + H(+)(in). The enzyme catalyses Fe(2+)(in) + H(+)(out) = Fe(2+)(out) + H(+)(in). The catalysed reaction is Mn(2+)(in) + H(+)(out) = Mn(2+)(out) + H(+)(in). Macrophage-specific antiporter that fluxes metal ions in either direction against a proton gradient. Localized to late endosomal lysosomal membranes, delivers bivalent cations from the cytosol into these acidic compartments where they may directly affect antimicrobial activity. Involved in iron metabolism and host natural resistance to infection with intracellular parasites. Pathogen resistance involves sequestration of Fe(2+) and Mn(2+), cofactors of both prokaryotic and eukaryotic catalases and superoxide dismutases, not only to protect the macrophage against its own generation of reactive oxygen species, but to deny the cations to the pathogen for synthesis of its protective enzymes. This is Natural resistance-associated macrophage protein 1 (SLC11A1) from Bos taurus (Bovine).